Reading from the N-terminus, the 414-residue chain is MNEVLAKGKKAKEIARELVLKSTEQKNEALSAIADQLILETAYILEENKKDIEEGKAKGFSDSLLDRLMLNEQRIVDMTEGIKQLIELRDPVGECVSAWERPNGLSIQEMRVPLGVVGMIYEARPNVTVDAATICLKTGNAVILRGSSSAIHSNKAIVAVIHRALKQTSLPQESVQLIEDTTRDSAKQLFTMNDYLDVLIPRGGKQLIDTVVREASVPVLETGAGNCHVFIDETADKQMAFDIINAKTQRPSVCNAIETIVLHEKWAEQYGSELFSSLKKRGVELRGDQKALAMDSTIVLASEEDWGTEFLSLTPAVKLVSSIEEAIHHINTYGSMHSEAIISENEEKVSKFFVSVDAAALYHNASTRFTDGSEFGSGAEIGISTQKLHVRGPMGLPALTSTKYVIRGNGQIRK.

Belongs to the gamma-glutamyl phosphate reductase family.

The protein resides in the cytoplasm. The enzyme catalyses L-glutamate 5-semialdehyde + phosphate + NADP(+) = L-glutamyl 5-phosphate + NADPH + H(+). Its pathway is amino-acid biosynthesis; L-proline biosynthesis; L-glutamate 5-semialdehyde from L-glutamate: step 2/2. Catalyzes the NADPH-dependent reduction of L-glutamate 5-phosphate into L-glutamate 5-semialdehyde and phosphate. The product spontaneously undergoes cyclization to form 1-pyrroline-5-carboxylate. This chain is Gamma-glutamyl phosphate reductase, found in Bacillus anthracis (strain A0248).